The sequence spans 391 residues: MSESNSTGILPPAAQVPLAFLMSSFAFAIMVGNAVVILAFVVDRNLRHRSNYFFLNLAISDFLVGLISIPLYIPHVLFNWNFGSGICMFWLITDYLLCTASVYNIVLISYDRYQSVSNAVSYRAQHTGIMKIVAQMVAVWILAFLVNGPMILASDSWKNSTNTKDCEPGFVTEWYILTITMLLEFLLPVISVAYFNVQIYWSLWKRRALSRCPSHAGFSTTSSSASGHLHRAGVACRTSNPGLKESAASRHSESPRRKSSILVSLRTHMNSSITAFKVGSFWRSESAALRQREYAELLRGRKLARSLAILLSAFAICWAPYCLFTIVLSTYPRTERPKSVWYSIAFWLQWFNSFVNPFLYPLCHRRFQKAFWKILCVTKQPALSQNQSVSS.

Topologically, residues 1–19 (MSESNSTGILPPAAQVPLA) are extracellular. Asn-5 is a glycosylation site (N-linked (GlcNAc...) asparagine). Residues 20–40 (FLMSSFAFAIMVGNAVVILAF) traverse the membrane as a helical segment. At 41–52 (VVDRNLRHRSNY) the chain is on the cytoplasmic side. A helical membrane pass occupies residues 53–73 (FFLNLAISDFLVGLISIPLYI). The Extracellular portion of the chain corresponds to 74 to 87 (PHVLFNWNFGSGIC). Cysteines 87 and 166 form a disulfide. The chain crosses the membrane as a helical span at residues 88-108 (MFWLITDYLLCTASVYNIVLI). The Cytoplasmic portion of the chain corresponds to 109 to 131 (SYDRYQSVSNAVSYRAQHTGIMK). The chain crosses the membrane as a helical span at residues 132–152 (IVAQMVAVWILAFLVNGPMIL). Topologically, residues 153–174 (ASDSWKNSTNTKDCEPGFVTEW) are extracellular. A glycan (N-linked (GlcNAc...) asparagine) is linked at Asn-159. The helical transmembrane segment at 175–195 (YILTITMLLEFLLPVISVAYF) threads the bilayer. Over 196-306 (NVQIYWSLWK…LLRGRKLARS (111 aa)) the chain is Cytoplasmic. The disordered stretch occupies residues 238–258 (TSNPGLKESAASRHSESPRRK). The segment covering 247-256 (AASRHSESPR) has biased composition (basic and acidic residues). A helical membrane pass occupies residues 307–327 (LAILLSAFAICWAPYCLFTIV). The Extracellular segment spans residues 328-343 (LSTYPRTERPKSVWYS). A helical membrane pass occupies residues 344–364 (IAFWLQWFNSFVNPFLYPLCH). Residues 365-391 (RRFQKAFWKILCVTKQPALSQNQSVSS) are Cytoplasmic-facing.

This sequence belongs to the G-protein coupled receptor 1 family. Interacts with TSPAN4.

It localises to the cell membrane. Its function is as follows. The H4 subclass of histamine receptors could mediate the histamine signals in peripheral tissues. Displays a significant level of constitutive activity (spontaneous activity in the absence of agonist). The polypeptide is Histamine H4 receptor (Hrh4) (Mus musculus (Mouse)).